A 117-amino-acid chain; its full sequence is Non-specific lipid-transfer protein 1 (117 aa).

Positions 1–26 (MAYSAMTKLALVVALCMVVSVPIAQA) are cleaved as a signal peptide. 4 cysteine pairs are disulfide-bonded: Cys29–Cys76, Cys39–Cys53, Cys54–Cys99, and Cys74–Cys113.

The protein belongs to the plant LTP family.

Its function is as follows. Plant non-specific lipid-transfer proteins transfer phospholipids as well as galactolipids across membranes. May play a role in wax or cutin deposition in the cell walls of expanding epidermal cells and certain secretory tissues. The sequence is that of Non-specific lipid-transfer protein 1 from Prunus dulcis (Almond).